A 184-amino-acid chain; its full sequence is GTP cyclohydrolase 1 (184 aa).

The Zn(2+) site is built by cysteine 75, histidine 78, and cysteine 146.

This sequence belongs to the GTP cyclohydrolase I family. As to quaternary structure, toroid-shaped homodecamer, composed of two pentamers of five dimers.

It carries out the reaction GTP + H2O = 7,8-dihydroneopterin 3'-triphosphate + formate + H(+). The protein operates within cofactor biosynthesis; 7,8-dihydroneopterin triphosphate biosynthesis; 7,8-dihydroneopterin triphosphate from GTP: step 1/1. The protein is GTP cyclohydrolase 1 of Pseudoalteromonas translucida (strain TAC 125).